A 279-amino-acid polypeptide reads, in one-letter code: MTERFDCHHCNESLFGKKYILREESPYCVVCFETLFANTCEECGKPIGCDCKDLSYKDRHWHEACFHCSQCRNSLVDKPFAAKEDQLLCTDCYSNEYSSKCQECKKTIMPGTRKMEYKGSSWHETCFICHRCQQPIGTKSFIPKDNQNFCVPCYEKQHAMQCVQCKKPITTGGVTYREQPWHKECFVCTACRKQLSGQRFTARDDFAYCLNCFCDLYAKKCAGCTNPISGLGGTKYISFEERQWHNDCFNCKKCSLSLVGRGFLTERDDILCPDCGKDI.

Residues 7–31 form a C4-type zinc finger; the sequence is CHHCNESLFGKKYILREESPYCVVC. 3 LIM zinc-binding domains span residues 40 to 92, 101 to 153, and 162 to 212; these read CEEC…CTDC, CQEC…CVPC, and CVQC…CLNC. Residue lysine 78 forms a Glycyl lysine isopeptide (Lys-Gly) (interchain with G-Cter in SUMO2) linkage. Glycyl lysine isopeptide (Lys-Gly) (interchain with G-Cter in SUMO2) cross-links involve residues lysine 167 and lysine 220. The 55-residue stretch at 221–275 folds into the LIM zinc-binding 4 domain; that stretch reads CAGCTNPISGLGGTKYISFEERQWHNDCFNCKKCSLSLVGRGFLTERDDILCPDC. Serine 238 is modified (phosphoserine).

In terms of assembly, interacts with ZNF638 and TTN/titin. Interacts with E4F1. Interacts with GRB7. Interacts with SIRT1 and FOXO1. Interacts with CEFIP. Interacts with calcineurin. Interacts with FOXK1. Expressed in skeletal muscle and heart.

It localises to the cytoplasm. The protein localises to the nucleus. Its subcellular location is the myofibril. The protein resides in the sarcomere. It is found in the z line. May function as a molecular transmitter linking various signaling pathways to transcriptional regulation. Negatively regulates the transcriptional repressor E4F1 and may function in cell growth. Inhibits the transcriptional activity of FOXO1 and its apoptotic function by enhancing the interaction of FOXO1 with SIRT1 and FOXO1 deacetylation. Negatively regulates the calcineurin/NFAT signaling pathway in cardiomyocytes. The chain is Four and a half LIM domains protein 2 (FHL2) from Homo sapiens (Human).